Consider the following 118-residue polypeptide: V-type proton ATPase subunit G 2 (118 aa).

The disordered stretch occupies residues 25–90 (ARKRKARRLK…VQGMQSSQQR (66 aa)). The span at 35–56 (QAKEEAQMEVEQYRREREHEFQ) shows a compositional bias: basic and acidic residues. Composition is skewed to polar residues over residues 57-69 (SKQQ…QGNL) and 78-89 (RRQVQGMQSSQQ).

The protein belongs to the V-ATPase G subunit family. In terms of assembly, V-ATPase is a heteromultimeric enzyme made up of two complexes: the ATP-hydrolytic V1 complex and the proton translocation V0 complex. The V1 complex consists of three catalytic AB heterodimers that form a heterohexamer, three peripheral stalks each consisting of EG heterodimers, one central rotor including subunits D and F, and the regulatory subunits C and H. The proton translocation complex V0 consists of the proton transport subunit a, a ring of proteolipid subunits c9c'', rotary subunit d, subunits e and f, and the accessory subunits ATP6AP1/Ac45 and ATP6AP2/PRR. In terms of tissue distribution, brain.

Its subcellular location is the melanosome. The protein resides in the cytoplasmic vesicle. It localises to the clathrin-coated vesicle membrane. In terms of biological role, subunit of the V1 complex of vacuolar(H+)-ATPase (V-ATPase), a multisubunit enzyme composed of a peripheral complex (V1) that hydrolyzes ATP and a membrane integral complex (V0) that translocates protons. V-ATPase is responsible for acidifying and maintaining the pH of intracellular compartments and in some cell types, is targeted to the plasma membrane, where it is responsible for acidifying the extracellular environment. This chain is V-type proton ATPase subunit G 2 (ATP6V1G2), found in Homo sapiens (Human).